A 540-amino-acid polypeptide reads, in one-letter code: Flavin-dependent halogenase ptaM (540 aa).

The signal sequence occupies residues 1-21; it reads MSVPAQTSVLIVGGGPAGSYA. The FAD site is built by Gly-14, Ala-17, and Glu-47. Asn-159, Asn-192, Asn-204, and Asn-243 each carry an N-linked (GlcNAc...) asparagine glycan. 2 residues coordinate chloride: Ser-330 and Gly-331. Asn-480, Asn-491, and Asn-523 each carry an N-linked (GlcNAc...) asparagine glycan.

This sequence belongs to the flavin-dependent halogenase family.

It functions in the pathway secondary metabolite biosynthesis. Flavin-dependent halogenase; part of the gene cluster that mediates the biosynthesis of pestheic acid, a diphenyl ether which is a biosynthetic precursor of the unique chloropupukeananes. The biosynthesis initiates from condensation of acetate and malonate units catalyzed by the non-reducing PKS ptaA. As the ptaA protein is TE/CLC domain-deficient, hydrolysis and Claisen cyclization of the polyketide could be catalyzed by ptaB containing a beta-lactamase domain. The ptaB protein might hydrolyze the thioester bond between the ACP of ptaA and the intermediate to release atrochrysone carboxylic acid, which is spontaneously dehydrated to form endocrocin anthrone. Endocrocin anthrone is then converted to endocrocin, catalyzed by the anthrone oxygenase ptaC. Spontaneous decarboxylation of endocrocin occurs to generate emodin. An O-methyltransferase (ptaH or ptaI) could methylate emodin to form physcion. PtaJ could then catalyze the oxidative cleavage of physcion, and rotation of the intermediate could then afford desmethylisosulochrin. PtaF, a putative NADH-dependent oxidoreductase, might also participate in the oxidative cleavage step. Desmethylisosulochrin is then transformed by another O-methyltransferase (ptaH or ptaI) to form isosulochrin. Chlorination of isosulochrin by ptaM in the cyclohexadienone B ring then produces chloroisosulochrin. PtaE is responsible for the oxidative coupling reactions of both benzophenones isosulochrin and chloroisosulochrin to RES-1214-1 and pestheic acid respectively, regardless of chlorination. The sequence is that of Flavin-dependent halogenase ptaM from Pestalotiopsis fici (strain W106-1 / CGMCC3.15140).